The chain runs to 94 residues: Co-chaperonin GroES (94 aa).

This sequence belongs to the GroES chaperonin family. Heptamer of 7 subunits arranged in a ring. Interacts with the chaperonin GroEL.

The protein resides in the cytoplasm. In terms of biological role, together with the chaperonin GroEL, plays an essential role in assisting protein folding. The GroEL-GroES system forms a nano-cage that allows encapsulation of the non-native substrate proteins and provides a physical environment optimized to promote and accelerate protein folding. GroES binds to the apical surface of the GroEL ring, thereby capping the opening of the GroEL channel. In Streptococcus pneumoniae (strain Hungary19A-6), this protein is Co-chaperonin GroES.